A 447-amino-acid chain; its full sequence is MASFPHPGSVTVCEINRDLITAQNLSDERAQETYGKVLGMVFSPVSFDSTPSSLQENEGQENGDKASGESKGLVATLQMKVADSLKQILQPTDVTLLSEIDLQGVSWHQGKHIIAFISGANQVTIRDYEDKDEKEPCILTSDSQRNVKALEWRPNGGKSLSIACRGGICIWAASYPGNMALVRSGGSALRGSLSRGSGTRWILVDFLRCQNDEQISALSWSPCGRYLASASYDSSSFTIWDVSQGAGTPIRRGLGGISMLKWSPTGDYFFAARFDGTFCLWETNTWTSEPWSLSSGSGSVTGAIWDPEGRFILISFSKSSTLGSVHFSSKPPSLDAHLLPVELPEIASLTGCEGIEKIAWDASGERLAVSYKGGDENYKGLIAIYDTRRTPIVSASLVGFIRGPGENPKALSFSFHDKFKQGPLLSVCWSTGFCCTYPLIFRSHVLP.

Positions S49 to E69 are disordered. WD repeat units follow at residues L97–I138, D142–L181, Q210–I250, and R252–W291.

Part of the nuclear pore complex (NPC). The NPC has an eight-fold symmetrical structure comprising a central transport channel and two rings, the cytoplasmic and nuclear rings, to which eight filaments are attached. The cytoplasmic filaments have loose ends, while the nuclear filaments are joined in a distal ring, forming a nuclear basket. NPCs are highly dynamic in configuration and composition, and can be devided in 3 subcomplexes, the NUP62 subcomplex, the NUP107-160 subcomplex and the NUP93 subcomplex, containing approximately 30 different nucleoporin proteins.

The protein localises to the nucleus envelope. Its subcellular location is the nucleus. It localises to the nuclear pore complex. The sequence is that of Aladin from Arabidopsis thaliana (Mouse-ear cress).